Reading from the N-terminus, the 364-residue chain is DNA replication and repair protein RecF (364 aa).

Residue 23–30 (GPNGIGKS) participates in ATP binding.

It belongs to the RecF family.

It localises to the cytoplasm. The RecF protein is involved in DNA metabolism; it is required for DNA replication and normal SOS inducibility. RecF binds preferentially to single-stranded, linear DNA. It also seems to bind ATP. This chain is DNA replication and repair protein RecF, found in Synechococcus sp. (strain CC9605).